The sequence spans 323 residues: Beta-ketoacyl-[acyl-carrier-protein] synthase III (323 aa).

Catalysis depends on residues cysteine 113 and histidine 250. The ACP-binding stretch occupies residues 251 to 255 (QANKR). Asparagine 280 is an active-site residue.

This sequence belongs to the thiolase-like superfamily. FabH family. In terms of assembly, homodimer.

Its subcellular location is the cytoplasm. It carries out the reaction malonyl-[ACP] + acetyl-CoA + H(+) = 3-oxobutanoyl-[ACP] + CO2 + CoA. It functions in the pathway lipid metabolism; fatty acid biosynthesis. In terms of biological role, catalyzes the condensation reaction of fatty acid synthesis by the addition to an acyl acceptor of two carbons from malonyl-ACP. Catalyzes the first condensation reaction which initiates fatty acid synthesis and may therefore play a role in governing the total rate of fatty acid production. Possesses both acetoacetyl-ACP synthase and acetyl transacylase activities. Its substrate specificity determines the biosynthesis of branched-chain and/or straight-chain of fatty acids. The chain is Beta-ketoacyl-[acyl-carrier-protein] synthase III from Brucella suis (strain ATCC 23445 / NCTC 10510).